We begin with the raw amino-acid sequence, 1179 residues long: Probable manganese-transporting ATPase PDR2 (1179 aa).

Residues 1–20 (MSSFRVGGKVVEKVDLCRKK) are Cytoplasmic-facing. Residues 21–42 (QLVWRLDVWPFAILYTVWLTTI) traverse the membrane as a helical segment. The Lumenal portion of the chain corresponds to 43–50 (VPSIDFSD). Residues 51–71 (ACIALGGLSAFHILVLLFTTW) form a helical membrane-spanning segment. The Cytoplasmic portion of the chain corresponds to 72-192 (SVDFKCFVQF…FDYPQPTFQK (121 aa)). Residues 193 to 215 (LMKENCMEPFFVFQVFCVGLWCL) traverse the membrane as a helical segment. At 216 to 218 (DEF) the chain is on the lumenal side. Residues 219 to 238 (WYYSVFTLFMLFMFESTMAK) traverse the membrane as a helical segment. The Cytoplasmic portion of the chain corresponds to 239–402 (SRLKTLTDLR…ERVTANSWES (164 aa)). A helical transmembrane segment spans residues 403-422 (GLFILFLVVFAVIAAGYVLV). Residues 423–435 (KGLEDPTRSKYKL) are Lumenal-facing. The chain crosses the membrane as a helical span at residues 436 to 453 (LLGCSLIITSVIPPELPM). Over 454–947 (ELSIAVNTSL…RQGRSTLVTT (494 aa)) the chain is Cytoplasmic. Asp-491 functions as the 4-aspartylphosphate intermediate in the catalytic mechanism. Residues Asp-812 and Asp-816 each contribute to the Mg(2+) site. A disordered region spans residues 833 to 880 (KLPLSPSDSSKDDKSKSKKSKLPLEPASKTITQNGEGSSKGKIPPQNR). Residues 948-967 (LQMFKILGLNCLATAYVLSV) traverse the membrane as a helical segment. Residues 968–979 (MYLDGVKLGDVQ) are Lumenal-facing. The helical transmembrane segment at 980-997 (ATISGVLTAAFFLFISHA) threads the bilayer. The Cytoplasmic segment spans residues 998 to 1013 (RPLQTLSAERPHPSVF). A helical membrane pass occupies residues 1014–1034 (SVYLFLSLIGQFAVHLTFLVY). The Lumenal portion of the chain corresponds to 1035 to 1059 (SVKEAEKHMPEECIEPDASFHPNLV). The chain crosses the membrane as a helical span at residues 1060–1079 (NTVSYMVSMMLQVATFAVNY). At 1080-1092 (MGHPFNQSIRENK) the chain is on the cytoplasmic side. The chain crosses the membrane as a helical span at residues 1093-1110 (PFFYALIAGAGFFTVIAS). Residues 1111-1128 (DLFRDLNDSLKLVPLPQG) lie on the Lumenal side of the membrane. Residues 1129-1148 (LRDKLLIWASLMFIICYSWE) traverse the membrane as a helical segment. Residues 1149–1179 (RLLRWAFPGKISSWKHKQRAVTANLEKKKKV) lie on the Cytoplasmic side of the membrane.

It belongs to the cation transport ATPase (P-type) (TC 3.A.3) family. Type V subfamily. As to expression, highly expressed in root meristem. Expressed in pavement cells of trichomes, stipules, stamens and pollen grains.

The protein resides in the endoplasmic reticulum membrane. The enzyme catalyses ATP + H2O = ADP + phosphate + H(+). Its function is as follows. Mediates manganese transport into the endoplasmic reticulum. The ATPase activity is required for cellular manganese homeostasis. Plays an important role in pollen and root development through its impact on protein secretion and transport processes. Functions together with LPR1 and LPR2 in a common pathway that adjusts root meristem activity to phosphate availability. Under phosphate limitation, restricts SHR movement in root meristem and is required for maintaining SCR expression in the root meristem stem-cell niche as well as for proximal meristem activity. Can complement the yeast spf1 mutant. This is Probable manganese-transporting ATPase PDR2 (PDR2) from Arabidopsis thaliana (Mouse-ear cress).